We begin with the raw amino-acid sequence, 436 residues long: Methylenetetrahydrofolate--tRNA-(uracil-5-)-methyltransferase TrmFO (436 aa).

11 to 16 contacts FAD; that stretch reads GAGLAG.

The protein belongs to the MnmG family. TrmFO subfamily. FAD is required as a cofactor.

It is found in the cytoplasm. It catalyses the reaction uridine(54) in tRNA + (6R)-5,10-methylene-5,6,7,8-tetrahydrofolate + NADH + H(+) = 5-methyluridine(54) in tRNA + (6S)-5,6,7,8-tetrahydrofolate + NAD(+). It carries out the reaction uridine(54) in tRNA + (6R)-5,10-methylene-5,6,7,8-tetrahydrofolate + NADPH + H(+) = 5-methyluridine(54) in tRNA + (6S)-5,6,7,8-tetrahydrofolate + NADP(+). Catalyzes the folate-dependent formation of 5-methyl-uridine at position 54 (M-5-U54) in all tRNAs. In Shouchella clausii (strain KSM-K16) (Alkalihalobacillus clausii), this protein is Methylenetetrahydrofolate--tRNA-(uracil-5-)-methyltransferase TrmFO.